The sequence spans 145 residues: uncharacterized protein (145 aa).

The tract at residues 1–25 (MSENNENDGFNLDPDVKEELEETKS) is disordered. Positions 14 to 25 (PDVKEELEETKS) are enriched in basic and acidic residues.

This is an uncharacterized protein from His1 virus (isolate Australia/Victoria) (His1V).